The chain runs to 514 residues: Na(+)/H(+) antiporter NhaB (514 aa).

A run of 12 helical transmembrane segments spans residues 23-43, 52-72, 97-117, 120-140, 144-164, 202-222, 238-258, 303-323, 357-377, 391-411, 447-467, and 475-495; these read LALLVFLIINPLTFFTNSFVA, IFTLAMALKCYPLLPGGLLAI, LLLMFMVAGIYFMKQLLLFIF, LLLSIRSKMVLSLAFCVAAAF, FLDALTVVAVVISVAVGFYGI, LMMHAGVGTALGGVMTMVGEP, FFLRMSPVTVPVLVCGLLTCM, AIIGVWLVTALALHLAEVGLI, LTVFFSIVAVIIDQHLFAPII, LFYLFNGLLSSISDNVFVGTI, ATPNGQAAFLFLLTSALAPLI, and VWMALPYTIILTLVGLLCVEF.

This sequence belongs to the NhaB Na(+)/H(+) (TC 2.A.34) antiporter family.

The protein localises to the cell inner membrane. It carries out the reaction 2 Na(+)(in) + 3 H(+)(out) = 2 Na(+)(out) + 3 H(+)(in). Its function is as follows. Na(+)/H(+) antiporter that extrudes sodium in exchange for external protons. This chain is Na(+)/H(+) antiporter NhaB, found in Salmonella arizonae (strain ATCC BAA-731 / CDC346-86 / RSK2980).